Here is a 775-residue protein sequence, read N- to C-terminus: Melanoma-associated antigen D1 (775 aa).

The tract at residues 37-330 (SEAPPTSQAT…PARQTPSAWQ (294 aa)) is disordered. A compositionally biased stretch (low complexity) spans 39–50 (APPTSQATAAAS). Polar residues-rich tracts occupy residues 52 to 63 (PNASPQSSQPPT), 84 to 100 (KAQNTTTKGPNDYSQAR), 150 to 180 (GQNTTTKAGPSATYNFTQSPSANEMTNNQPK), 223 to 237 (AQTSADGSQAQNVES), 250 to 260 (NNLNVEENSNG), and 297 to 330 (LAWQNPSGWQNQTARQTPPARQSPPARQTPSAWQ). 19 repeat units span residues 293-298 (WQTPLA), 299-304 (WQNPSG), 305-310 (WQNQTA), 329-334 (WQNPVA), 335-340 (WQNPVI), 341-346 (WPNPVI), 347-352 (WQNPVI), 353-358 (WPNPIV), 359-364 (WPGPIV), 365-370 (WPNPMA), 371-376 (WQSTPG), 377-382 (WQSPPS), 383-388 (WQAPPS), 389-394 (WQSPQD), 395-400 (WQGPPD), 401-406 (WQLPPD), 407-412 (WSMPPD), 413-418 (WSFPSD), and 419-424 (WPFPPD). The 22 X 6 AA tandem repeats of W-[PQ]-X-P-X-X stretch occupies residues 293–441 (WQTPLAWQNP…IPPDWQNLRP (149 aa)). The disordered stretch occupies residues 374-407 (TPGWQSPPSWQAPPSWQSPQDWQGPPDWQLPPDW). Positions 375–406 (PGWQSPPSWQAPPSWQSPQDWQGPPDWQLPPD) are enriched in low complexity. The 20; approximate repeat unit spans residues 425–429 (WIPAD). Tandem repeats lie at residues 430–435 (WPIPPD) and 436–441 (WQNLRP). Positions 437 to 452 (QNLRPSPNLRSSPNSR) are enriched in low complexity. The tract at residues 437-463 (QNLRPSPNLRSSPNSRASQNQGPPQPR) is disordered. In terms of domain architecture, MAGE spans 468 to 666 (LQERANKLVK…RDWTAQFMEA (199 aa)).

As to quaternary structure, interacts with DLX5, DLX7 and MSX2 and forms homomultimers. Interacts with UNC5A. Interacts with TRIM28 and PJA1. Interacts with NGFR/p75NTR and RORA. As to expression, ubiquitous and in the seminiferous tubules expressed in Sertoli cells but not in germ cells. Expression decreases in all tissues with increased age and is detectable only in brain cortex and lung.

Its subcellular location is the cytoplasm. It is found in the cell membrane. It localises to the nucleus. Involved in the apoptotic response after nerve growth factor (NGF) binding in neuronal cells. Inhibits cell cycle progression, and facilitates NGFR-mediated apoptosis. May act as a regulator of the function of DLX family members. May enhance ubiquitin ligase activity of RING-type zinc finger-containing E3 ubiquitin-protein ligases. Proposed to act through recruitment and/or stabilization of the Ubl-conjugating enzyme (E2) at the E3:substrate complex. Plays a role in the circadian rhythm regulation. May act as RORA co-regulator, modulating the expression of core clock genes such as BMAL1 and NFIL3, induced, or NR1D1, repressed. This is Melanoma-associated antigen D1 (Maged1) from Rattus norvegicus (Rat).